The primary structure comprises 688 residues: Protein SDA1 homolog (688 aa).

Ser-232, Ser-234, and Ser-236 each carry phosphoserine. The stretch at 254 to 318 forms a coiled coil; the sequence is KKSSKNKKKL…ERFEVKMMLM (65 aa). A compositionally biased stretch (acidic residues) spans 484 to 498; that stretch reads VENEEENAEGDEDGW. The tract at residues 484–524 is disordered; sequence VENEEENAEGDEDGWESASLSDEADSDGEWVDVHHSSDEEQ. Over residues 514–524 the composition is skewed to basic and acidic residues; sequence VDVHHSSDEEQ. Residues Ser-586 and Ser-596 each carry the phosphoserine modification. Residues 605–688 are disordered; sequence KKPKSDKETR…ALLKKRKRMK (84 aa). The span at 668–681 shows a compositional bias: basic and acidic residues; it reads SFREKQLALRDALL.

Belongs to the SDA1 family.

It is found in the nucleus. The protein localises to the nucleolus. Functionally, required for 60S pre-ribosomal subunits export to the cytoplasm. This is Protein SDA1 homolog (SDAD1) from Bos taurus (Bovine).